A 1317-amino-acid polypeptide reads, in one-letter code: Nucleoporin NUP145 (1317 aa).

Polar residues predominate over residues Met1–Asn16. The disordered stretch occupies residues Met1–Lys36. An FG 1 repeat occupies Phe12–Gly13. The segment covering Thr17–Ser30 has biased composition (low complexity). One copy of the GLFG 1 repeat lies at Gly39–Gly42. Residues Phe79 to Gly80 form an FG 2 repeat. A GLFG 2 repeat occupies Gly89 to Gly92. An FG 3 repeat occupies Phe106–Gly107. A disordered region spans residues Gln133–Gly165. GLFG repeat units lie at residues Gly136–Gly139, Gly154–Gly157, Gly168–Gly171, and Gly181–Gly184. The segment covering Gly139 to Ala164 has biased composition (low complexity). The GLFG 7; approximate repeat unit spans residues Gly193–Gly196. Residues Gly206–Gly209 form a GLFG 8 repeat. Residues Thr249–Val278 form a disordered region. Residues Gly257–Arg270 show a composition bias toward basic and acidic residues. Ser273 is subject to Phosphoserine. The Bipartite nuclear localization signal signature appears at Arg369–Leu385. Residues Pro390–Thr450 form a disordered region. The tract at residues Gln398–Ser523 is required for autocatalytic cleavage. Phosphoserine occurs at positions 403, 404, and 414. A compositionally biased stretch (basic and acidic residues) spans Ile418–Asn427. Residues Leu428 to Lys444 are compositionally biased toward polar residues. Residues Ser458–Phe605 form the Peptidase S59 domain. The nucleoporin RNA-binding motif (NRM) stretch occupies residues Gly460–His604. Phosphoserine occurs at positions 667, 679, and 689. Thr751 carries the post-translational modification Phosphothreonine.

It belongs to the nucleoporin GLFG family. In terms of assembly, component of the nuclear pore complex (NPC). NPC constitutes the exclusive means of nucleocytoplasmic transport. NPCs allow the passive diffusion of ions and small molecules and the active, nuclear transport receptor-mediated bidirectional transport of macromolecules such as proteins, RNAs, ribonucleoparticles (RNPs), and ribosomal subunits across the nuclear envelope. Due to its 8-fold rotational symmetry, all subunits are present with 8 copies or multiples thereof. NUP145C is part of the heptameric 0.5 MDa autoassembling NUP84 NPC subcomplex (NUP84, NUP85, NUP120, NUP133, NUP145C, SEC13 and SEH1). NUP145N may bind homomeric RNA and interacts through its FG repeats with karyopherins. Interacts with MLP1 and MLP2. In terms of processing, NUP145 is autocatalytically cleaved in NUP145N and NUP145C.

The protein localises to the nucleus. The protein resides in the nuclear pore complex. It is found in the nucleus membrane. Its function is as follows. Functions as a component of the nuclear pore complex (NPC). NPC components, collectively referred to as nucleoporins (NUPs), can play the role of both NPC structural components and of docking or interaction partners for transiently associated nuclear transport factors. Active directional transport is assured by both, a Phe-Gly (FG) repeat affinity gradient for these transport factors across the NPC and a transport cofactor concentration gradient across the nuclear envelope (GSP1 and GSP2 GTPases associated predominantly with GTP in the nucleus, with GDP in the cytoplasm). NUP145 is autocatalytically cleaved in vivo in 2 polypeptides which assume different functions in the NPC. NUP145N as one of the FG repeat nucleoporins participates in karyopherin interactions and contains part of the autocatalytic cleavage activity. NUP145C as part of the NUP84 complex is involved in nuclear poly(A)+ RNA and tRNA export. It is also required for normal NPC distribution (probably through interactions with MLP1 and MLP2) and NPC assembly, as well as for normal nuclear envelope organization. The protein is Nucleoporin NUP145 (NUP145) of Saccharomyces cerevisiae (strain ATCC 204508 / S288c) (Baker's yeast).